The primary structure comprises 285 residues: uncharacterized protein (285 aa).

The chain crosses the membrane as a helical span at residues 6–26 (IKYFSTIIVAVVAVLAGWWLW).

This sequence belongs to the membrane fusion protein (MFP) (TC 8.A.1) family.

The protein localises to the membrane. This is an uncharacterized protein from Escherichia coli (strain K12).